The sequence spans 133 residues: Phosphomevalonate dehydratase small subunit (133 aa).

Serine 62 (proton acceptor) is an active-site residue.

The protein belongs to the AcnX type II small subunit family. As to quaternary structure, heterodimer composed of a large subunit (PMDh-L) and a small subunit (PMDh-S).

The enzyme catalyses (R)-5-phosphomevalonate = (2E)-3-methyl-5-phosphooxypent-2-enoate + H2O. It participates in isoprenoid biosynthesis; isopentenyl diphosphate biosynthesis via mevalonate pathway. Functionally, component of a hydro-lyase that catalyzes the dehydration of mevalonate 5-phosphate (MVA5P) to form trans-anhydromevalonate 5-phosphate (tAHMP). Involved in the archaeal mevalonate (MVA) pathway, which provides fundamental precursors for isoprenoid biosynthesis, such as isopentenyl diphosphate (IPP) and dimethylallyl diphosphate (DMAPP). The chain is Phosphomevalonate dehydratase small subunit from Thermococcus kodakarensis (strain ATCC BAA-918 / JCM 12380 / KOD1) (Pyrococcus kodakaraensis (strain KOD1)).